Reading from the N-terminus, the 296-residue chain is Thioredoxin-related transmembrane protein 2 (296 aa).

The first 48 residues, 1 to 48 (MAVLAPLIALVYSVPRLSRWLAQPYYLLSALLSAAFLLVRKLPPLCHG), serve as a signal peptide directing secretion. Residues 49–102 (LPTQREDGNPCDFDWREVEILMFLSAIVMMKNRRSITVEQHIGNIFMFSKVANA) lie on the Extracellular side of the membrane. Residues 103–125 (ILFFRLDIRMGLLYITLCIVFLM) traverse the membrane as a helical segment. In terms of domain architecture, Thioredoxin spans 114–269 (LLYITLCIVF…LYQRAKKLSK (156 aa)). The Cytoplasmic portion of the chain corresponds to 126 to 296 (TCKPPLYMGP…VSDGESKKDK (171 aa)). 3 positions are modified to phosphoserine: serine 211, serine 243, and serine 288. Positions 269-296 (KAGDNIPEEQPVAPTPTRVSDGESKKDK) are disordered. Residues 293-296 (KKDK) carry the Di-lysine motif motif.

As to quaternary structure, monomer. Homodimer; disulfide-linked. Occurs in both reduced and oxidized monomeric form. Oxidative conditions increase homodimerization. Interacts with CANX. Interacts with ATP2A2.

Its subcellular location is the endoplasmic reticulum membrane. The protein localises to the mitochondrion membrane. Its function is as follows. Endoplasmic reticulum and mitochondria-associated protein that probably functions as a regulator of cellular redox state and thereby regulates protein post-translational modification, protein folding and mitochondrial activity. Indirectly regulates neuronal proliferation, migration, and organization in the developing brain. In Macaca fascicularis (Crab-eating macaque), this protein is Thioredoxin-related transmembrane protein 2 (TMX2).